The primary structure comprises 156 residues: Peroxisome assembly protein 22 (156 aa).

Residues 24 to 46 (LSIIAVGVLSTVAVTVGYLLYLY) traverse the membrane as a helical segment.

It belongs to the peroxin-22 family.

The protein resides in the peroxisome membrane. Involved in peroxisome biogenesis. The chain is Peroxisome assembly protein 22 (PEX22) from Kluyveromyces lactis (strain ATCC 8585 / CBS 2359 / DSM 70799 / NBRC 1267 / NRRL Y-1140 / WM37) (Yeast).